The chain runs to 209 residues: MPIFLNFSAGSILPENELNSLRYIVQQNQNDTVIIRGRHQMEIRYIESVNGFTIHPVHSNHLSILMKRGNSLARNLERQINNGRSFEQVSRDFMLQLSLNIGWQKGAENALKSKIHSHAFIVNPDEFTCSKQYLECPITFCIPENGVFVKNSMDSKVCSLYDKSAIMQLIRKHHPHPLSREKIAKEMIIDKNNCYFDIMNQHFRILDTD.

It belongs to the NleG E3 ligase family. In terms of processing, two sizes of protein are detected in situ; only the smaller protein is secreted.

It localises to the secreted. The protein resides in the host cytoplasm. The catalysed reaction is S-ubiquitinyl-[E2 ubiquitin-conjugating enzyme]-L-cysteine + [acceptor protein]-L-lysine = [E2 ubiquitin-conjugating enzyme]-L-cysteine + N(6)-ubiquitinyl-[acceptor protein]-L-lysine.. Its function is as follows. Effector proteins function to alter host cell physiology and promote bacterial survival in host tissues. This protein is probably an E3 ubiquitin-protein ligase that interferes with the host's ubiquitination pathway and targets host proteins for proteasomal degradation. Mice infected with a strain of bacteria deleted for this gene were colonized less quickly by bacteria. The chain is Probable E3 ubiquitin-protein ligase NleG7 from Citrobacter rodentium.